Here is a 776-residue protein sequence, read N- to C-terminus: DNA ligase (776 aa).

NAD(+) contacts are provided by residues aspartate 31 to aspartate 35, serine 80 to leucine 81, and glutamate 112. Catalysis depends on lysine 114, which acts as the N6-AMP-lysine intermediate. The NAD(+) site is built by arginine 135, glutamate 172, lysine 288, and lysine 312. Residues cysteine 406, cysteine 409, cysteine 436, and cysteine 442 each contribute to the Zn(2+) site. A BRCT domain is found at alanine 693–valine 776.

The protein belongs to the NAD-dependent DNA ligase family. LigA subfamily. The cofactor is Mg(2+). Mn(2+) is required as a cofactor.

It catalyses the reaction NAD(+) + (deoxyribonucleotide)n-3'-hydroxyl + 5'-phospho-(deoxyribonucleotide)m = (deoxyribonucleotide)n+m + AMP + beta-nicotinamide D-nucleotide.. Its function is as follows. DNA ligase that catalyzes the formation of phosphodiester linkages between 5'-phosphoryl and 3'-hydroxyl groups in double-stranded DNA using NAD as a coenzyme and as the energy source for the reaction. It is essential for DNA replication and repair of damaged DNA. This chain is DNA ligase, found in Pseudomonas putida (strain ATCC 700007 / DSM 6899 / JCM 31910 / BCRC 17059 / LMG 24140 / F1).